Consider the following 173-residue polypeptide: Regulatory protein RecX (173 aa).

It belongs to the RecX family.

It localises to the cytoplasm. In terms of biological role, modulates RecA activity. This is Regulatory protein RecX from Mycobacterium avium (strain 104).